The sequence spans 427 residues: Endothelin-1 receptor (427 aa).

Positions 1 to 20 (METFWLRLSFWVALVGGVIS) are cleaved as a signal peptide. At 21-80 (DNPESYSTNLSIHVDSVATFHGTELSFVVTTHQPTNLALPSNGSMHNYCPQQTKITSAFK) the chain is on the extracellular side. N29 and N62 each carry an N-linked (GlcNAc...) asparagine glycan. A helical transmembrane segment spans residues 81–102 (YINTVISCTIFIVGMVGNATLL). The Cytoplasmic segment spans residues 103 to 112 (RIIYQNKCMR). A helical transmembrane segment spans residues 113–132 (NGPNALIASLALGDLIYVVI). Over 133-159 (DLPINVFKLLAGRWPFEQNDFGVFLCK) the chain is Extracellular. A disulfide bridge connects residues C158 and C239. A helical transmembrane segment spans residues 160–181 (LFPFLQKSSVGITVLNLCALSV). The Cytoplasmic portion of the chain corresponds to 182-205 (DRYRAVASWSRVQGIGIPLVTAIE). The helical transmembrane segment at 206–229 (IVSIWILSFILAIPEAIGFVMVPF) threads the bilayer. Residues 230–256 (EYKGAQHRTCMLNATSKFMEFYQDVKD) lie on the Extracellular side of the membrane. The helical transmembrane segment at 257–278 (WWLFGFYFCMPLVCTAIFYTLM) threads the bilayer. The Cytoplasmic portion of the chain corresponds to 279–306 (TCEMLNRRNGSLRIALSEHLKQRREVAK). Residues 307 to 328 (TVFCLVVIFALCWFPLHLSRIL) form a helical membrane-spanning segment. Topologically, residues 329–347 (KKTVYDEMDTNRCELLSFL) are extracellular. Residues 348–372 (LLMDYIGINLATMNSCINPIALYFV) form a helical membrane-spanning segment. Topologically, residues 373 to 427 (SKKFKNCFQSCLCCCCYQSKSLMTSVPMNGTSIQWKNHEQNNHNTERSSHKDSIN) are cytoplasmic. S425 carries the phosphoserine modification.

This sequence belongs to the G-protein coupled receptor 1 family. Endothelin receptor subfamily. EDNRA sub-subfamily. As to quaternary structure, interacts with HDAC7 and KAT5.

The protein resides in the cell membrane. Receptor for endothelin-1. Mediates its action by association with G proteins that activate a phosphatidylinositol-calcium second messenger system. The rank order of binding affinities for ET-A is: ET1 &gt; ET2 &gt;&gt; ET3. This is Endothelin-1 receptor from Bos taurus (Bovine).